The following is a 400-amino-acid chain: Acetate kinase (400 aa).

Asparagine 7 contributes to the Mg(2+) binding site. Lysine 14 contacts ATP. Substrate is bound at residue arginine 85. Residue aspartate 142 is the Proton donor/acceptor of the active site. ATP contacts are provided by residues 202–206, 278–280, and 326–330; these read HLGNG, DMR, and GIGEN. Residue glutamate 380 coordinates Mg(2+).

The protein belongs to the acetokinase family. As to quaternary structure, homodimer. Mg(2+) is required as a cofactor. Mn(2+) serves as cofactor.

The protein localises to the cytoplasm. It catalyses the reaction acetate + ATP = acetyl phosphate + ADP. It participates in metabolic intermediate biosynthesis; acetyl-CoA biosynthesis; acetyl-CoA from acetate: step 1/2. Functionally, catalyzes the formation of acetyl phosphate from acetate and ATP. Can also catalyze the reverse reaction. This chain is Acetate kinase, found in Deinococcus deserti (strain DSM 17065 / CIP 109153 / LMG 22923 / VCD115).